Reading from the N-terminus, the 388-residue chain is Leucine aminopeptidase 1 (388 aa).

Residues Met-1–Ala-19 form the signal peptide. The propeptide occupies Ala-20–Val-88. Residues Asn-106 and Asn-180 are each glycosylated (N-linked (GlcNAc...) asparagine). Residues His-188 and Asp-207 each coordinate Zn(2+). Asn-232 is a glycosylation site (N-linked (GlcNAc...) asparagine). Residues Glu-246 and Asp-273 each contribute to the Zn(2+) site. Cys-322 and Cys-326 form a disulfide bridge. His-355 is a Zn(2+) binding site.

It belongs to the peptidase M28 family. M28E subfamily. As to quaternary structure, monomer. Zn(2+) serves as cofactor.

It localises to the secreted. In terms of biological role, extracellular aminopeptidase that allows assimilation of proteinaceous substrates. This is Leucine aminopeptidase 1 (lap1) from Aspergillus clavatus (strain ATCC 1007 / CBS 513.65 / DSM 816 / NCTC 3887 / NRRL 1 / QM 1276 / 107).